The primary structure comprises 119 residues: Short coiled-coil protein A (119 aa).

The span at 1–10 (MEGDVDEDDG) shows a compositional bias: acidic residues. Residues 1-26 (MEGDVDEDDGTFTNISLADDSADGEP) are disordered. Positions 48-95 (MENQVEQEEKTRLINQVLELQHTLEDLSARVDAVKEENLKLKSENQVL) form a coiled coil.

Belongs to the SCOC family.

The protein localises to the golgi apparatus membrane. It is found in the golgi apparatus. Its subcellular location is the trans-Golgi network. It localises to the cytoplasm. The protein resides in the cytosol. Functionally, positive regulator of amino acid starvation-induced autophagy. This is Short coiled-coil protein A (scoca) from Danio rerio (Zebrafish).